A 77-amino-acid polypeptide reads, in one-letter code: Protein IDA (77 aa).

An N-terminal signal peptide occupies residues 1–26; the sequence is MAPCRTMMVLLCFVLFLAASSSCVAA. The tract at residues 56 to 69 is RLK5-binding; that stretch reads GVPIPPSAPSKRHN.

In terms of assembly, interaction with RLK5. In terms of tissue distribution, expressed specifically in the floral abscission zone.

The protein resides in the secreted. It is found in the extracellular space. Functionally, involved in an ethylene-independent separation step of floral abscission. Promotes abscission zone (AZ) cells rounding. May act with RLK5 and HSL2 as ligand-receptor pairs. In Arabidopsis thaliana (Mouse-ear cress), this protein is Protein IDA.